Here is a 273-residue protein sequence, read N- to C-terminus: Flagellin FljO (273 aa).

It belongs to the bacterial flagellin family. As to quaternary structure, in C.crescentus, the flagellar filament is composed of multiple flagellins of 29 kDa; 27 kDa and 25 kDa.

It is found in the secreted. Its subcellular location is the bacterial flagellum. Its function is as follows. Flagellin is the subunit protein which polymerizes to form the filaments of bacterial flagella. The protein is Flagellin FljO (fljO) of Caulobacter vibrioides (strain ATCC 19089 / CIP 103742 / CB 15) (Caulobacter crescentus).